Consider the following 486-residue polypeptide: ATP synthase subunit beta (486 aa).

Glycine 170–threonine 177 contributes to the ATP binding site.

The protein belongs to the ATPase alpha/beta chains family. As to quaternary structure, F-type ATPases have 2 components, CF(1) - the catalytic core - and CF(0) - the membrane proton channel. CF(1) has five subunits: alpha(3), beta(3), gamma(1), delta(1), epsilon(1). CF(0) has three main subunits: a(1), b(2) and c(9-12). The alpha and beta chains form an alternating ring which encloses part of the gamma chain. CF(1) is attached to CF(0) by a central stalk formed by the gamma and epsilon chains, while a peripheral stalk is formed by the delta and b chains.

The protein resides in the cell membrane. It catalyses the reaction ATP + H2O + 4 H(+)(in) = ADP + phosphate + 5 H(+)(out). In terms of biological role, produces ATP from ADP in the presence of a proton gradient across the membrane. The catalytic sites are hosted primarily by the beta subunits. This is ATP synthase subunit beta from Clavibacter michiganensis subsp. michiganensis (strain NCPPB 382).